The sequence spans 411 residues: Imidazolonepropionase (411 aa).

Fe(3+) is bound by residues His-75 and His-77. Residues His-75 and His-77 each coordinate Zn(2+). 4-imidazolone-5-propanoate contacts are provided by Arg-84, Tyr-147, and His-180. Tyr-147 lines the N-formimidoyl-L-glutamate pocket. Fe(3+) is bound at residue His-245. Zn(2+) is bound at residue His-245. A 4-imidazolone-5-propanoate-binding site is contributed by Gln-248. Fe(3+) is bound at residue Asp-320. Asp-320 is a Zn(2+) binding site. Residues Asn-322 and Gly-324 each contribute to the N-formimidoyl-L-glutamate site. Residue Thr-325 coordinates 4-imidazolone-5-propanoate.

This sequence belongs to the metallo-dependent hydrolases superfamily. HutI family. Zn(2+) serves as cofactor. Requires Fe(3+) as cofactor.

Its subcellular location is the cytoplasm. The enzyme catalyses 4-imidazolone-5-propanoate + H2O = N-formimidoyl-L-glutamate. Its pathway is amino-acid degradation; L-histidine degradation into L-glutamate; N-formimidoyl-L-glutamate from L-histidine: step 3/3. In terms of biological role, catalyzes the hydrolytic cleavage of the carbon-nitrogen bond in imidazolone-5-propanoate to yield N-formimidoyl-L-glutamate. It is the third step in the universal histidine degradation pathway. This is Imidazolonepropionase from Photobacterium profundum (strain SS9).